Consider the following 625-residue polypeptide: Chaperone protein HtpG (625 aa).

The tract at residues 1–332 is a; substrate-binding; it reads MSKKTNAPVQ…TEDLSLNVSR (332 aa). A b region spans residues 333–545; sequence EVVQSSPVMA…KDAMDSQMER (213 aa). The tract at residues 546–625 is c; it reads MMKMMQQEMP…ELIEAATLSR (80 aa).

The protein belongs to the heat shock protein 90 family. In terms of assembly, homodimer.

Its subcellular location is the cytoplasm. Molecular chaperone. Has ATPase activity. The sequence is that of Chaperone protein HtpG from Chlorobium phaeovibrioides (strain DSM 265 / 1930) (Prosthecochloris vibrioformis (strain DSM 265)).